We begin with the raw amino-acid sequence, 633 residues long: MSADTQSETLEFQAEVQQLLSLMIHSVYSNREVFLRELISNASDAIDKLRFEALQQESLYEDDPELKIRVEADPEARTVTVIDNGIGMSREDVIENLGTIAHSGTRRFLEQLTGDQHKDAQLIGQFGVGFYSAFVVADRVEVYTRKAGAAAAEGVRWSSDGQGAYTVDTVERAERGTAVVLHLPEAQQEFCDDMRLRQIIRKYSDHISVPIEMPVRNADQGDDADSEAEAPQWEIVNRASALWMRPKSEISEEDYQELYKHVAHDFDDPLTWIHNHVEGRQSYVSLLYIPKRPPFDLYEQKPAHGVKLYVRRVFITEDTEHLLPRYLRFVRGVIDSDDLPLNISREMLQHNPMISSLRSASVKRILDRLECMAKNEPEDYATFWQAFGRVFKEGIAEDPGNRERIARLLRFSSTHEEKETPDVSLDDYVARMKDGQEKIYYVTAESFNAARNSPHLEIFRRHGIEVLLLPDPVDEWLVAHLHEYDGKQLASVAKGELDLEALGEEDDKQARQEKEQAYEDLCKRLGETLGERVSEVRVSHRLTDSPACLVVGEYDFGMGMQRLLQAAGHQLPAGQPALEVNPDHSVIERLATESGQRFEDWALTLYEQSLLAEGGQLEDPAAYVRRVNNLLAG.

The segment at 1-345 (MSADTQSETL…SDDLPLNISR (345 aa)) is a; substrate-binding. Residues 346–562 (EMLQHNPMIS…EYDFGMGMQR (217 aa)) are b. The interval 563-633 (LLQAAGHQLP…VRRVNNLLAG (71 aa)) is c.

It belongs to the heat shock protein 90 family. As to quaternary structure, homodimer.

The protein resides in the cytoplasm. Functionally, molecular chaperone. Has ATPase activity. In Halorhodospira halophila (strain DSM 244 / SL1) (Ectothiorhodospira halophila (strain DSM 244 / SL1)), this protein is Chaperone protein HtpG.